A 355-amino-acid chain; its full sequence is MELFDKVKALTEIQATSGFEGPVRDYLKARMVELGYQPEFDGLGGIFVTKASKVENAPRIMVAAHMDEVGFMVSSIKADGTFRVVPLGGWNPLVVSGQRFTLFTRTGKKIPVVTGGLPPHLLRGTGVTPQIPAISDIIFDGAFENAAEAAEFGIAQGDLIIPETETILSANGKNIISKAWDNRYGCLMILELLEFLADKELPVTLIIGANVQEEVGLRGAKVSTTKFNPDLFFAVDCSPASDTFGDDNGRLGEGTTLRFFDPGHIMLPGMKNFLLDTANHAKVKTQVYMAKGGTDAGAAHLANGGVPSTTIGVVARYIHSHQTIFNIDDFLQAQTFLRAIITSLNTEKVAEIKNY.

A divalent metal cation-binding residues include histidine 65 and aspartate 181. Residue glutamate 213 is the Proton acceptor of the active site. The a divalent metal cation site is built by glutamate 214, aspartate 236, and histidine 319.

It belongs to the peptidase M42 family. A divalent metal cation serves as cofactor.

It carries out the reaction Release of N-terminal glutamate (and to a lesser extent aspartate) from a peptide.. The protein is Glutamyl aminopeptidase (pepA) of Lactococcus lactis subsp. cremoris (strain MG1363).